The sequence spans 2595 residues: Glucosylceramide transporter ABCA12 (2595 aa).

A helical membrane pass occupies residues 23-43 (PLWTLVLILWPVIIFIILAIT). N-linked (GlcNAc...) asparagine glycosylation is found at Asn156, Asn174, Asn214, Asn275, Asn333, Asn367, Asn383, Asn412, Asn435, Asn528, Asn543, Asn577, Asn608, Asn623, Asn648, Asn752, Asn826, Asn920, and Asn963. 3 helical membrane passes run 1065-1085 (VSYS…AAFV), 1112-1132 (FAWL…LIII), and 1145-1165 (FILF…SYLI). A glycan (N-linked (GlcNAc...) asparagine) is linked at Asn1170. Transmembrane regions (helical) follow at residues 1174 to 1194 (IAAL…IVLV), 1200 to 1220 (LSYV…SYAS), and 1250 to 1270 (FGWL…IAWY). Positions 1346–1577 (VALHGVTKIY…FGDGYHLTLT (232 aa)) constitute an ABC transporter 1 domain. 1378–1385 (GPNGAGKT) contributes to the ATP binding site. 3 N-linked (GlcNAc...) asparagine glycosylation sites follow: Asn1524, Asn1663, and Asn1704. A helical membrane pass occupies residues 1747 to 1767 (LIAQVILPIVFVTTAMGLGTL). Asn1769, Asn1819, Asn1835, Asn1876, Asn1921, and Asn1952 each carry an N-linked (GlcNAc...) asparagine glycan. 4 helical membrane-spanning segments follow: residues 1979–1999 (ATIS…GYSV), 2035–2055 (FIYD…IIAI), 2072–2092 (LLLL…AGLF), and 2103–2123 (VCVN…VYFL). The N-linked (GlcNAc...) asparagine glycan is linked to Asn2178. Residues 2187–2207 (GAMFVALVSQGTMFFSLRLLI) form a helical membrane-spanning segment. 2 N-linked (GlcNAc...) asparagine glycosylation sites follow: Asn2208 and Asn2223. An ABC transporter 2 domain is found at 2254–2489 (VQLYCLTKTY…FGRGFTVKVH (236 aa)). A helical membrane pass occupies residues 2270-2290 (IIAVNNISIGIPAGECFGLLG). Position 2290-2297 (2290-2297 (GVNGAGKT)) interacts with ATP. 3 N-linked (GlcNAc...) asparagine glycosylation sites follow: Asn2318, Asn2542, and Asn2547. The interval 2571–2595 (SYETADTSSQGSTISVDSQDDQMES) is disordered. The segment covering 2574–2587 (TADTSSQGSTISVD) has biased composition (polar residues).

Belongs to the ABC transporter superfamily. ABCA family. In terms of assembly, interacts with NR1H2 and ABCA1; this interaction is required for ABCA1 localization to the cell surface and is necessary for its normal activity and stability. In terms of tissue distribution, mainly expressed in the stomach, placenta, testis and fetal brain. Expressed in the upper epidermal layers, mainly the granular layers, of skin. Expressed throughout the normal interfollicular epidermis with prominent expression in the stratum granulosum. Expressed in alpha and beta cells of pancreatic islets.

It is found in the cytoplasmic vesicle. The protein resides in the secretory vesicle membrane. It localises to the golgi apparatus membrane. The catalysed reaction is ATP + H2O + phospholipidSide 1 = ADP + phosphate + phospholipidSide 2.. The enzyme catalyses a beta-D-glucosylceramide(in) + ATP + H2O = a beta-D-glucosylceramide(out) + ADP + phosphate + H(+). Functionally, transports lipids such as glucosylceramides from the outer to the inner leaflet of lamellar granules (LGs) membrane, whereby the lipids are finally transported to the keratinocyte periphery via the trans-Golgi network and LGs and released to the apical surface of the granular keratinocytes to form lipid lamellae in the stratum corneum of the epidermis, which is essential for skin barrier function. In the meantime, participates in the transport of the lamellar granules-associated proteolytic enzymes, in turn regulates desquamation and keratinocyte differentiation. Furthermore, is essential for the regulation of cellular cholesterol homeostasis by regulating ABCA1-dependent cholesterol efflux from macrophages through interaction with NR1H2 and ABCA1. Plays pleiotropic roles in regulating glucose stimulated insulin secretion from beta cells, regulating the morphology and fusion of insulin granules, lipid raft abundance and the actin cytoskeleton. Also involved in lung surfactant biogenesis. The polypeptide is Glucosylceramide transporter ABCA12 (Homo sapiens (Human)).